The following is a 171-amino-acid chain: Adenine phosphoribosyltransferase (171 aa).

Belongs to the purine/pyrimidine phosphoribosyltransferase family. In terms of assembly, homodimer.

The protein localises to the cytoplasm. The enzyme catalyses AMP + diphosphate = 5-phospho-alpha-D-ribose 1-diphosphate + adenine. It participates in purine metabolism; AMP biosynthesis via salvage pathway; AMP from adenine: step 1/1. In terms of biological role, catalyzes a salvage reaction resulting in the formation of AMP, that is energically less costly than de novo synthesis. This is Adenine phosphoribosyltransferase from Mycoplasmopsis fermentans (strain ATCC 19989 / NBRC 14854 / NCTC 10117 / PG18) (Mycoplasma fermentans).